A 97-amino-acid polypeptide reads, in one-letter code: MKSGIHPDYHPVVFQDATTGATFLTRSTITSSRTIEWETPHGVRTYPLVVVEITSDSHPFWTGSRRIVDTAGQVEKFHRRYGSRRQTNHRDDAAHSP.

It belongs to the bacterial ribosomal protein bL31 family. Type B subfamily. Part of the 50S ribosomal subunit.

This is Large ribosomal subunit protein bL31B (rpmE2) from Mycolicibacterium paratuberculosis (strain ATCC BAA-968 / K-10) (Mycobacterium paratuberculosis).